We begin with the raw amino-acid sequence, 370 residues long: Spermidine/putrescine import ATP-binding protein PotA (370 aa).

Residues 11 to 241 (IELRSITKSY…PKNLFVAKFI (231 aa)) form the ABC transporter domain. 43-50 (GPSGCGKT) lines the ATP pocket.

This sequence belongs to the ABC transporter superfamily. Spermidine/putrescine importer (TC 3.A.1.11.1) family. In terms of assembly, the complex is composed of two ATP-binding proteins (PotA), two transmembrane proteins (PotB and PotC) and a solute-binding protein (PotD).

It localises to the cell inner membrane. It carries out the reaction ATP + H2O + polyamine-[polyamine-binding protein]Side 1 = ADP + phosphate + polyamineSide 2 + [polyamine-binding protein]Side 1.. Part of the ABC transporter complex PotABCD involved in spermidine/putrescine import. Responsible for energy coupling to the transport system. The sequence is that of Spermidine/putrescine import ATP-binding protein PotA from Pasteurella multocida (strain Pm70).